The primary structure comprises 395 residues: MDLFEYQARDVFEKHGVPVLGGIVATTVDEARAAAETLTSGAGSVVVVKAQVKTGGRGKAGGVKLARSPEEAAEAAEQILGMDIKGHTVHRVMIAEGASIAEEYYFSVLLDRANRSYLAMASVEGGVEIEQLAVERPEALARVAVDPLVGIDAAKAAEIVAAAGFADDVAGAVADVIQKLWTVYDAEDATLVEVNPLVRTTDGRVIALDGKVTLDDNAEFRHPEHAELEDAASADPLEAKAKAHDLNYVKLDGEVGIIGNGAGLVMSTLDVVAYAGERHGGVKPANFLDIGGGASAAVMAAGLDVILGDPQVKSVFVNVFGGITACDEVARGIVQALEILGDKENKPLVVRLDGNAVEEGRAILAEANHPLVTLAETMDGGADAAAAAAHSAVTA.

One can recognise an ATP-grasp domain in the interval 9-240; sequence RDVFEKHGVP…AASADPLEAK (232 aa). ATP-binding positions include Lys-49, 56–58, Ala-98, and Glu-103; that span reads GRG. Residues Asn-195 and Asp-209 each coordinate Mg(2+). Substrate-binding positions include Asn-260 and 322–324; that span reads GIT.

Belongs to the succinate/malate CoA ligase beta subunit family. Heterotetramer of two alpha and two beta subunits. Requires Mg(2+) as cofactor.

It carries out the reaction succinate + ATP + CoA = succinyl-CoA + ADP + phosphate. It catalyses the reaction GTP + succinate + CoA = succinyl-CoA + GDP + phosphate. It participates in carbohydrate metabolism; tricarboxylic acid cycle; succinate from succinyl-CoA (ligase route): step 1/1. In terms of biological role, succinyl-CoA synthetase functions in the citric acid cycle (TCA), coupling the hydrolysis of succinyl-CoA to the synthesis of either ATP or GTP and thus represents the only step of substrate-level phosphorylation in the TCA. The beta subunit provides nucleotide specificity of the enzyme and binds the substrate succinate, while the binding sites for coenzyme A and phosphate are found in the alpha subunit. This chain is Succinate--CoA ligase [ADP-forming] subunit beta, found in Beutenbergia cavernae (strain ATCC BAA-8 / DSM 12333 / CCUG 43141 / JCM 11478 / NBRC 16432 / NCIMB 13614 / HKI 0122).